The sequence spans 23 residues: Aurein-4.4 (23 aa).

The protein belongs to the frog skin active peptide (FSAP) family. Aurein subfamily. Expressed by the skin dorsal glands.

It localises to the secreted. Functionally, has no antimicrobial or anticancer activity. The polypeptide is Aurein-4.4 (Ranoidea aurea (Green and golden bell frog)).